Reading from the N-terminus, the 233-residue chain is Probable chemoreceptor glutamine deamidase CheD (233 aa).

The protein belongs to the CheD family.

It catalyses the reaction L-glutaminyl-[protein] + H2O = L-glutamyl-[protein] + NH4(+). In terms of biological role, probably deamidates glutamine residues to glutamate on methyl-accepting chemotaxis receptors (MCPs), playing an important role in chemotaxis. The protein is Probable chemoreceptor glutamine deamidase CheD of Ralstonia nicotianae (strain ATCC BAA-1114 / GMI1000) (Ralstonia solanacearum).